A 1340-amino-acid polypeptide reads, in one-letter code: Protein SHORT ROOT IN SALT MEDIUM 1 (1340 aa).

Disordered regions lie at residues 1–73, 161–185, 357–473, 723–750, 784–990, and 1063–1269; these read MHRD…RSHL, YGEQ…ADPS, EEER…IRRS, TVEV…KKTV, PETT…PPRA, and RNQR…KREE. The segment covering 7–39 has biased composition (low complexity); sequence SSRGTGYGQQQYGSQSGYSQNLGSGYPGSSVSG. Polar residues predominate over residues 46–60; it reads QISLSSRHPSITGAP. 3 stretches are compositionally biased toward basic and acidic residues: residues 173–182, 357–470, and 723–735; these read LQNEPTRRYA, EEER…EASI, and TVEV…KKSP. Residues 355-426 adopt a coiled-coil conformation; the sequence is LREEERRRED…RERKRALEIK (72 aa). The segment covering 810–824 has biased composition (polar residues); sequence GDTSDPSAKANEQTP. Residues 828–840 are compositionally biased toward basic residues; the sequence is IVKKKIIKRVAKR. 4 stretches are compositionally biased toward basic and acidic residues: residues 841–872, 887–988, 1069–1097, and 1105–1138; these read KVAE…KKSS, EDVK…EEPP, HQEE…DKEA, and PGKD…ETLG. A coiled-coil region spans residues 1052-1086; that stretch reads LKKLRVKIVRQRNQRKRHQEELSVKQNEAKSQDKR. Residues 1153 to 1204 show a composition bias toward acidic residues; sequence ENQDEEDDDGDDDPEEDPEEDPEEDPEEDPEEDPEECEEMDVANTEQEEPAE. Basic and acidic residues-rich tracts occupy residues 1205 to 1214 and 1229 to 1257; these read EPQKKEENLE and TDNR…HGKQ. In terms of domain architecture, EF-hand spans 1270-1305; sequence TVDKELLQAFRFFDRNQAGYVRVEDMRVTIHSLGKF.

In terms of assembly, interacts with BHLH148/RITF1. As to expression, expressed ubiquitously at high levels, including in guard cells.

The protein localises to the nucleus. Required for salt tolerance and sodium (Na) homeostasis after salt stress. Together with BHLH148/RITF1, regulates the transcription of several genes involved in the detoxification of reactive oxygen species (ROS) generated by salt (NaCl) stress. Binds calcium. This chain is Protein SHORT ROOT IN SALT MEDIUM 1, found in Arabidopsis thaliana (Mouse-ear cress).